The sequence spans 772 residues: Polyribonucleotide nucleotidyltransferase (772 aa).

The Mg(2+) site is built by Asp486 and Asp492. The 60-residue stretch at Pro553–Ile612 folds into the KH domain. Residues Gly622 to Arg690 form the S1 motif domain. The tract at residues Glu695–Asp772 is disordered. Residues Glu701–Ala760 show a composition bias toward basic and acidic residues.

It belongs to the polyribonucleotide nucleotidyltransferase family. Mg(2+) serves as cofactor.

It is found in the cytoplasm. The enzyme catalyses RNA(n+1) + phosphate = RNA(n) + a ribonucleoside 5'-diphosphate. Involved in mRNA degradation. Catalyzes the phosphorolysis of single-stranded polyribonucleotides processively in the 3'- to 5'-direction. This Novosphingobium aromaticivorans (strain ATCC 700278 / DSM 12444 / CCUG 56034 / CIP 105152 / NBRC 16084 / F199) protein is Polyribonucleotide nucleotidyltransferase.